The following is an 838-amino-acid chain: Rho GTPase-activating protein 12 (838 aa).

One can recognise an SH3 domain in the interval 10–72 (AGQAYIEVEY…PAQYVKEVTR (63 aa)). Composition is skewed to polar residues over residues 155-172 (GKFN…QNRT) and 189-198 (TSFSQEQSCD). Residues 155–239 (GKFNSDSHSP…PPNQGRPDSP (85 aa)) form a disordered region. Ser163 carries the post-translational modification Phosphoserine. Ser199, Ser211, and Ser213 each carry phosphoserine. A phosphothreonine mark is found at Thr228 and Thr229. The residue at position 238 (Ser238) is a Phosphoserine. Position 241 is a phosphotyrosine (Tyr241). One can recognise a WW 1 domain in the interval 263–296 (IQVNGEWETHKDSSGRCYYYNRTTQERTWKPPRW). A compositionally biased stretch (basic and acidic residues) spans 291–302 (WKPPRWARDVST). Residues 291–346 (WKPPRWARDVSTSRDFQSPGEQEPLSSEENYHSSCFSQSDSQCGSPPRGWSEELDE) form a disordered region. Residues 303–334 (SRDFQSPGEQEPLSSEENYHSSCFSQSDSQCG) are compositionally biased toward polar residues. The 34-residue stretch at 355–388 (DYTKEKWLKHVDDQGRQYYYSADGSRSEWELPKY) folds into the WW 2 domain. The interval 425–456 (DSNDKDSPTTTKLCLPENESPPTSSKHQDPGQ) is disordered. Positions 466–567 (KITENGKKVR…WFKVLSSTIN (102 aa)) constitute a PH domain. Residues 572 to 582 (EADEAAEEETP) are compositionally biased toward acidic residues. A disordered region spans residues 572-620 (EADEAAEEETPDSPGVEKHDKEKDQKELKKLRSMKGSSMDSSEQKKTKK). A Phosphoserine modification is found at Ser584. Positions 586-601 (GVEKHDKEKDQKELKK) are enriched in basic and acidic residues. Positions 648 to 836 (SNLANLCQRE…LILLELSTVF (189 aa)) constitute a Rho-GAP domain.

Its function is as follows. GTPase activator for the Rho-type GTPases by converting them to an inactive GDP-bound state. This chain is Rho GTPase-activating protein 12 (Arhgap12), found in Mus musculus (Mouse).